A 447-amino-acid chain; its full sequence is Alkylglycerol monooxygenase (447 aa).

A run of 2 helical transmembrane segments spans residues 43-63 (ATPF…ILKG) and 111-131 (WDSP…YYWF). The Fatty acid hydroxylase domain occupies 118-249 (YLTFLGVDFG…LIIWDRIFGT (132 aa)). The Histidine box-1 motif lies at 132 to 136 (HRMAH). Residues 145-149 (HQAHH) carry the Histidine box-2 motif. The chain crosses the membrane as a helical span at residues 170–190 (SWVFYCPLALFVPPSVFAVHI). Residues 221–225 (HRVHH) carry the Histidine box-3 motif. Helical transmembrane passes span 334-354 (FLKI…EETF), 363-383 (VTIL…GFLL), and 413-433 (IESL…FWGV).

The protein belongs to the sterol desaturase family. TMEM195 subfamily. Fe cation is required as a cofactor.

It localises to the endoplasmic reticulum membrane. The catalysed reaction is 1-O-(1,2-saturated-alkyl)-sn-glycerol + (6R)-L-erythro-5,6,7,8-tetrahydrobiopterin + O2 = a 1-(1-hydroxyalkyl)-sn-glycerol + (6R)-L-erythro-6,7-dihydrobiopterin + H2O. Functionally, glyceryl-ether monooxygenase that cleaves the O-alkyl bond of ether lipids. Ether lipids are essential components of brain membranes. This is Alkylglycerol monooxygenase (Agmo) from Rattus norvegicus (Rat).